The chain runs to 144 residues: NADH dehydrogenase [ubiquinone] 1 alpha subcomplex subunit 13 (144 aa).

At Ala2 the chain carries N-acetylalanine. Residues 30-51 (LSGYSMLAIGIGTLIYGHWSIM) form a helical membrane-spanning segment. The interval 102–144 (PDWKVGESVFHTTRWVPPLIGELYGLRTTEEALHASHGFMWYT) is important for inducing cell death.

Belongs to the complex I NDUFA13 subunit family. In terms of assembly, complex I is composed of 45 different subunits. Interacts with CARD15, but not with CARD4. Interacts with STAT3, but not with STAT1, STAT2 and STAT5A. Interacts with OLFM4. (Microbial infection) Interacts with HHV-8 IRF1, in the nucleus, with HPV-16 E6 and SV40 LT. As to expression, widely expressed, with highest expression in heart, skeletal muscle, liver, kidney and placenta. In intestinal mucosa, down-regulated in areas involved in Crohn disease and ulcerative colitis.

It is found in the mitochondrion inner membrane. It localises to the nucleus. Functionally, accessory subunit of the mitochondrial membrane respiratory chain NADH dehydrogenase (Complex I), that is believed not to be involved in catalysis. Complex I functions in the transfer of electrons from NADH to the respiratory chain. The immediate electron acceptor for the enzyme is believed to be ubiquinone. Involved in the interferon/all-trans-retinoic acid (IFN/RA) induced cell death. This apoptotic activity is inhibited by interaction with viral IRF1. Prevents the transactivation of STAT3 target genes. May play a role in CARD15-mediated innate mucosal responses and serve to regulate intestinal epithelial cell responses to microbes. The chain is NADH dehydrogenase [ubiquinone] 1 alpha subcomplex subunit 13 (NDUFA13) from Homo sapiens (Human).